A 494-amino-acid polypeptide reads, in one-letter code: Xylan glycosyltransferase MUCI21 (494 aa).

Residues 1–40 lie on the Cytoplasmic side of the membrane; that stretch reads MRQNLKKVAQIKVDESKKLFPYVFRVKTSCGNCAKRSKPK. A helical; Signal-anchor for type II membrane protein membrane pass occupies residues 41–61; that stretch reads LIYLLIFSLISSCFVFAPQLL. The Lumenal segment spans residues 62–494; that stretch reads CFPYPSALFL…LIDAYAKSIR (433 aa). N375 carries N-linked (GlcNAc...) asparagine glycosylation.

Belongs to the glycosyltransferase 61 family.

It is found in the golgi apparatus membrane. Glycosyletransferase required for the proper composition and structural properties of released seed coat mucilage. Required for the production of highly branched xylan polymers in seed coat mucilage. Facilitates the addition of xylose residues directly to the xylan backbone. Xylan with xylose side chains seems to be necessary for pectin attachment to the seed surface. Essential for xylan synthesis in seed coat epidermal (SCE) cells. This Arabidopsis thaliana (Mouse-ear cress) protein is Xylan glycosyltransferase MUCI21.